The primary structure comprises 586 residues: Arginine--tRNA ligase (586 aa).

The 'HIGH' region signature appears at 133-143; sequence ANPTGPLNIVS.

The protein belongs to the class-I aminoacyl-tRNA synthetase family. In terms of assembly, monomer.

Its subcellular location is the cytoplasm. The catalysed reaction is tRNA(Arg) + L-arginine + ATP = L-arginyl-tRNA(Arg) + AMP + diphosphate. In Leptospira interrogans serogroup Icterohaemorrhagiae serovar copenhageni (strain Fiocruz L1-130), this protein is Arginine--tRNA ligase.